We begin with the raw amino-acid sequence, 206 residues long: Small ribosomal subunit protein uS4 (206 aa).

Residues 96–156 (TRLDNVVYRM…EKSRTQARIK (61 aa)) form the S4 RNA-binding domain.

This sequence belongs to the universal ribosomal protein uS4 family. As to quaternary structure, part of the 30S ribosomal subunit. Contacts protein S5. The interaction surface between S4 and S5 is involved in control of translational fidelity.

One of the primary rRNA binding proteins, it binds directly to 16S rRNA where it nucleates assembly of the body of the 30S subunit. Functionally, with S5 and S12 plays an important role in translational accuracy. This chain is Small ribosomal subunit protein uS4, found in Shewanella putrefaciens (strain CN-32 / ATCC BAA-453).